The primary structure comprises 195 residues: 3-isopropylmalate dehydratase small subunit (195 aa).

This sequence belongs to the LeuD family. LeuD type 1 subfamily. In terms of assembly, heterodimer of LeuC and LeuD.

It carries out the reaction (2R,3S)-3-isopropylmalate = (2S)-2-isopropylmalate. Its pathway is amino-acid biosynthesis; L-leucine biosynthesis; L-leucine from 3-methyl-2-oxobutanoate: step 2/4. Functionally, catalyzes the isomerization between 2-isopropylmalate and 3-isopropylmalate, via the formation of 2-isopropylmaleate. This is 3-isopropylmalate dehydratase small subunit from Salinispora arenicola (strain CNS-205).